Reading from the N-terminus, the 312-residue chain is Acetyl-coenzyme A carboxylase carboxyl transferase subunit beta (312 aa).

The 270-residue stretch at 24–293 (LWIKCPDSGQ…PHADEVAAPP (270 aa)) folds into the CoA carboxyltransferase N-terminal domain. Positions 286–312 (ADEVAAPPPPDVEGPPPAAEPVALPPA) are disordered. The span at 291–312 (APPPPDVEGPPPAAEPVALPPA) shows a compositional bias: pro residues.

Belongs to the AccD/PCCB family. As to quaternary structure, acetyl-CoA carboxylase is a heterohexamer composed of biotin carboxyl carrier protein (AccB), biotin carboxylase (AccC) and two subunits each of ACCase subunit alpha (AccA) and ACCase subunit beta (AccD).

It localises to the cytoplasm. The enzyme catalyses N(6)-carboxybiotinyl-L-lysyl-[protein] + acetyl-CoA = N(6)-biotinyl-L-lysyl-[protein] + malonyl-CoA. The protein operates within lipid metabolism; malonyl-CoA biosynthesis; malonyl-CoA from acetyl-CoA: step 1/1. Component of the acetyl coenzyme A carboxylase (ACC) complex. Biotin carboxylase (BC) catalyzes the carboxylation of biotin on its carrier protein (BCCP) and then the CO(2) group is transferred by the transcarboxylase to acetyl-CoA to form malonyl-CoA. The chain is Acetyl-coenzyme A carboxylase carboxyl transferase subunit beta from Afipia carboxidovorans (strain ATCC 49405 / DSM 1227 / KCTC 32145 / OM5) (Oligotropha carboxidovorans).